A 411-amino-acid chain; its full sequence is MTQPFRSELSRYLRTATVGGSILLIAAAIALVWANSPVSDSYFALRDWQIGPQALHLNLTVGTWAQDGLLAVFFFVAGLELKRELVVGELADRKRALLPIIAACGGVVVPAIIAATIGAGTPGMDRGWAIPVATDIAFALGVLALTGSRIPTSARVFLLSLAVVDDLLAIVLIAVLFTSSIALLWLLGAIACLAVYAFAQHRRITTPLLYVPLALLTWYCMHDAGIHATLAGVALGLLTRVRRDPGERESPASRLEHRIQPLSAGVCVPVFALFASGVALSSELLGQLFTNPISQSVIAGLLVGKTVGIFGISWLAIRLGIAKKPRALGFRDMFALSVLGAIGFTVSLLVADLALAGIGDGSEAEIAKVAVLVTSLTASLIGSALLWRRGRAHAARKDDSDVQELPGGVDK.

A run of 10 helical transmembrane segments spans residues 18 to 38 (VGGS…NSPV), 59 to 79 (LTVG…VAGL), 97 to 117 (LLPI…AATI), 127 to 147 (GWAI…ALTG), 167 to 187 (LLAI…LWLL), 218 to 238 (WYCM…LGLL), 261 to 281 (PLSA…VALS), 297 to 317 (VIAG…WLAI), 338 to 358 (VLGA…LAGI), and 366 to 386 (IAKV…SALL).

Belongs to the NhaA Na(+)/H(+) (TC 2.A.33) antiporter family.

Its subcellular location is the cell membrane. The enzyme catalyses Na(+)(in) + 2 H(+)(out) = Na(+)(out) + 2 H(+)(in). Its function is as follows. Na(+)/H(+) antiporter that extrudes sodium in exchange for external protons. The protein is Na(+)/H(+) antiporter NhaA 2 of Rhodococcus jostii (strain RHA1).